A 500-amino-acid chain; its full sequence is Cytochrome P450 71D7 (500 aa).

Heme is bound at residue C441.

The protein belongs to the cytochrome P450 family. Heme is required as a cofactor.

The protein is Cytochrome P450 71D7 (CYP71D7) of Solanum chacoense (Chaco potato).